The chain runs to 172 residues: Ribosome maturation factor RimM (172 aa).

The PRC barrel domain maps to 94-167; it reads EGSYYYKDII…VAHVIVPEGL (74 aa).

It belongs to the RimM family. As to quaternary structure, binds ribosomal protein uS19.

Its subcellular location is the cytoplasm. Its function is as follows. An accessory protein needed during the final step in the assembly of 30S ribosomal subunit, possibly for assembly of the head region. Essential for efficient processing of 16S rRNA. May be needed both before and after RbfA during the maturation of 16S rRNA. It has affinity for free ribosomal 30S subunits but not for 70S ribosomes. In Lacticaseibacillus paracasei (strain ATCC 334 / BCRC 17002 / CCUG 31169 / CIP 107868 / KCTC 3260 / NRRL B-441) (Lactobacillus paracasei), this protein is Ribosome maturation factor RimM.